The sequence spans 769 residues: Homoaconitase, mitochondrial (769 aa).

A mitochondrion-targeting transit peptide spans 1–28 (MQSRLLPSGPGRRWISLRVPNTPQRRAF). [4Fe-4S] cluster is bound by residues C391, C460, and C463.

Belongs to the aconitase/IPM isomerase family. Requires [4Fe-4S] cluster as cofactor.

Its subcellular location is the mitochondrion. The enzyme catalyses (2R,3S)-homoisocitrate = cis-homoaconitate + H2O. It participates in amino-acid biosynthesis; L-lysine biosynthesis via AAA pathway; L-alpha-aminoadipate from 2-oxoglutarate: step 3/5. Catalyzes the reversible hydration of cis-homoaconitate to (2R,3S)-homoisocitrate, a step in the alpha-aminoadipate pathway for lysine biosynthesis. This Aspergillus niger (strain ATCC MYA-4892 / CBS 513.88 / FGSC A1513) protein is Homoaconitase, mitochondrial (lysA).